A 107-amino-acid chain; its full sequence is Putative double-stranded DNA mimic protein HSM_1473 (107 aa).

It belongs to the putative dsDNA mimic protein family.

In terms of biological role, may act as a double-stranded DNA (dsDNA) mimic. Probably regulates the activity of a dsDNA-binding protein. The chain is Putative double-stranded DNA mimic protein HSM_1473 from Histophilus somni (strain 2336) (Haemophilus somnus).